Consider the following 105-residue polypeptide: Pyrimidine/purine nucleoside phosphorylase (105 aa).

The protein belongs to the nucleoside phosphorylase PpnP family.

The catalysed reaction is a purine D-ribonucleoside + phosphate = a purine nucleobase + alpha-D-ribose 1-phosphate. It catalyses the reaction adenosine + phosphate = alpha-D-ribose 1-phosphate + adenine. The enzyme catalyses cytidine + phosphate = cytosine + alpha-D-ribose 1-phosphate. It carries out the reaction guanosine + phosphate = alpha-D-ribose 1-phosphate + guanine. The catalysed reaction is inosine + phosphate = alpha-D-ribose 1-phosphate + hypoxanthine. It catalyses the reaction thymidine + phosphate = 2-deoxy-alpha-D-ribose 1-phosphate + thymine. The enzyme catalyses uridine + phosphate = alpha-D-ribose 1-phosphate + uracil. It carries out the reaction xanthosine + phosphate = alpha-D-ribose 1-phosphate + xanthine. Its function is as follows. Catalyzes the phosphorolysis of diverse nucleosides, yielding D-ribose 1-phosphate and the respective free bases. Can use uridine, adenosine, guanosine, cytidine, thymidine, inosine and xanthosine as substrates. Also catalyzes the reverse reactions. This Cupriavidus taiwanensis (strain DSM 17343 / BCRC 17206 / CCUG 44338 / CIP 107171 / LMG 19424 / R1) (Ralstonia taiwanensis (strain LMG 19424)) protein is Pyrimidine/purine nucleoside phosphorylase.